Reading from the N-terminus, the 91-residue chain is Anther-specific protein RTS (91 aa).

An N-terminal signal peptide occupies residues 1 to 21 (MVRVGAAAAVLVLAAAAAAMA).

Its function is as follows. Required for tapetum and pollen development. In Oryza sativa subsp. japonica (Rice), this protein is Anther-specific protein RTS.